Consider the following 1788-residue polypeptide: Protein TIC 214 (1788 aa).

6 consecutive transmembrane segments (helical) span residues 25–45, 70–90, 95–115, 132–152, 180–200, and 223–243; these read IINSVVVVGLYYGFFTTFSIG, IGFIAGQLMMFISIYYAPLHL, PHTITALVLPYLLFHFFWNNH, LNIQCIFLNSLIFQLFNHFIL, VGWLVGHIFFMKWVELVLFWI, and IFSILLFIVCIYYLGRMPSPL. 2 disordered regions span residues 248 to 297 and 1482 to 1526; these read LKKT…EEKE and DLEN…DFDR. Basic and acidic residues-rich tracts occupy residues 253 to 277 and 1513 to 1526; these read KREERGKNKEETDVEIEKISEEKGT and PLKKQTDGKEDFDR.

The protein belongs to the TIC214 family. Part of the Tic complex.

It localises to the plastid. It is found in the chloroplast inner membrane. Its function is as follows. Involved in protein precursor import into chloroplasts. May be part of an intermediate translocation complex acting as a protein-conducting channel at the inner envelope. This chain is Protein TIC 214, found in Ranunculus macranthus (Large buttercup).